The primary structure comprises 392 residues: Probable tRNA sulfurtransferase (392 aa).

The 108-residue stretch at 61 to 168 (DEALKLLSKV…EFTYIYSEII (108 aa)) folds into the THUMP domain. Residues 185–186 (LL), 210–211 (HF), Arg267, Gly289, and Gln298 each bind ATP.

The protein belongs to the ThiI family.

It localises to the cytoplasm. It carries out the reaction [ThiI sulfur-carrier protein]-S-sulfanyl-L-cysteine + a uridine in tRNA + 2 reduced [2Fe-2S]-[ferredoxin] + ATP + H(+) = [ThiI sulfur-carrier protein]-L-cysteine + a 4-thiouridine in tRNA + 2 oxidized [2Fe-2S]-[ferredoxin] + AMP + diphosphate. The enzyme catalyses [ThiS sulfur-carrier protein]-C-terminal Gly-Gly-AMP + S-sulfanyl-L-cysteinyl-[cysteine desulfurase] + AH2 = [ThiS sulfur-carrier protein]-C-terminal-Gly-aminoethanethioate + L-cysteinyl-[cysteine desulfurase] + A + AMP + 2 H(+). It participates in cofactor biosynthesis; thiamine diphosphate biosynthesis. Its function is as follows. Catalyzes the ATP-dependent transfer of a sulfur to tRNA to produce 4-thiouridine in position 8 of tRNAs, which functions as a near-UV photosensor. Also catalyzes the transfer of sulfur to the sulfur carrier protein ThiS, forming ThiS-thiocarboxylate. This is a step in the synthesis of thiazole, in the thiamine biosynthesis pathway. The sulfur is donated as persulfide by IscS. This Acetivibrio thermocellus (strain ATCC 27405 / DSM 1237 / JCM 9322 / NBRC 103400 / NCIMB 10682 / NRRL B-4536 / VPI 7372) (Clostridium thermocellum) protein is Probable tRNA sulfurtransferase.